The following is a 94-amino-acid chain: Large ribosomal subunit protein bL25 (94 aa).

This sequence belongs to the bacterial ribosomal protein bL25 family. In terms of assembly, part of the 50S ribosomal subunit; part of the 5S rRNA/L5/L18/L25 subcomplex. Contacts the 5S rRNA. Binds to the 5S rRNA independently of L5 and L18.

This is one of the proteins that binds to the 5S RNA in the ribosome where it forms part of the central protuberance. This is Large ribosomal subunit protein bL25 from Proteus mirabilis (strain HI4320).